A 364-amino-acid polypeptide reads, in one-letter code: Anhydro-N-acetylmuramic acid kinase (364 aa).

Gly-12–Asp-19 provides a ligand contact to ATP.

It belongs to the anhydro-N-acetylmuramic acid kinase family.

The enzyme catalyses 1,6-anhydro-N-acetyl-beta-muramate + ATP + H2O = N-acetyl-D-muramate 6-phosphate + ADP + H(+). It participates in amino-sugar metabolism; 1,6-anhydro-N-acetylmuramate degradation. It functions in the pathway cell wall biogenesis; peptidoglycan recycling. Functionally, catalyzes the specific phosphorylation of 1,6-anhydro-N-acetylmuramic acid (anhMurNAc) with the simultaneous cleavage of the 1,6-anhydro ring, generating MurNAc-6-P. Is required for the utilization of anhMurNAc either imported from the medium or derived from its own cell wall murein, and thus plays a role in cell wall recycling. In Gamma-proteobacterium EBAC31A08, this protein is Anhydro-N-acetylmuramic acid kinase.